A 546-amino-acid chain; its full sequence is MPDRTGPLLRTPAWRALEAHLAELQPLHLRELFARDPGRGERLVADGAGLHLDYSKQRVTEETVRLLVALAEARGLPERRAAMFRGEKVNVTEGRAVLHVALRAPRGERILVDGNDVVPEVHAVLDRMAAFADQVRSGAWTGFTGKRIRTVVNVGIGGSDLGPAMAYRALRAYAIRDLAFRFVSNVDGTDLAEAVRDLDPAETLFLVASKTFTTLETMTNAASARSWLLAALGDPRAVARHFVAISTNEAEVRRFGIDPANMFGFWDWVGGRYSMDSAIGLSTMIAVGPEGFRELLAGFREMDEHFRDAPLERNLPALIGLIGVWNANLLGAGTVAVLPYDQYLDRFPAYLQQLTMESNGKRVTASGTPVEGHGTGAIYWGEPGTNGQHSFYQLLHQGTHLVACDFIGFCQPLHALGRHHDLLMANLFAQGEALAFGKTAEEARAEGTPEPLVPHRTFPGNRPSSTILSDRLTPRTLGALVALYEHAVFTQGVIWDVDSFDQWGVELGKVLANRIVKELESPAEPALAHDGSTNALIRRYRARRGG.

E357 (proton donor) is an active-site residue. Active-site residues include H389 and K509.

It belongs to the GPI family.

It localises to the cytoplasm. The catalysed reaction is alpha-D-glucose 6-phosphate = beta-D-fructose 6-phosphate. It participates in carbohydrate biosynthesis; gluconeogenesis. It functions in the pathway carbohydrate degradation; glycolysis; D-glyceraldehyde 3-phosphate and glycerone phosphate from D-glucose: step 2/4. In terms of biological role, catalyzes the reversible isomerization of glucose-6-phosphate to fructose-6-phosphate. The protein is Glucose-6-phosphate isomerase of Anaeromyxobacter dehalogenans (strain 2CP-1 / ATCC BAA-258).